We begin with the raw amino-acid sequence, 541 residues long: Serine/threonine-protein kinase akt-1 (541 aa).

Residues 15–118 (DVVIEGWLHK…WIHAIESISK (104 aa)) enclose the PH domain. The Protein kinase domain occupies 193 to 450 (FDFLKVLGKG…ALEICRADFF (258 aa)). ATP-binding positions include 199-207 (LGKGTFGKV) and K222. D316 acts as the Proton acceptor in catalysis. T350 is subject to Phosphothreonine. An AGC-kinase C-terminal domain is found at 451 to 528 (RTVDWEATYR…HNVMGSINRI (78 aa)). S517 bears the Phosphoserine mark.

The protein belongs to the protein kinase superfamily. AGC Ser/Thr protein kinase family. RAC subfamily. Interacts with pdk-1, sgk-1, akt-2 and daf-16. Part of a complex containing sgk-1, akt-1 and akt-2. Interacts with cmd-1 in the presence of Ca(2+). Interacts with let-92 phosphatase regulatory subunit pptr-1. Mg(2+) serves as cofactor. As to expression, expressed in neurons, muscle cells of the pharynx, rectal gland cells, vulva and spermatheca.

The enzyme catalyses L-seryl-[protein] + ATP = O-phospho-L-seryl-[protein] + ADP + H(+). It catalyses the reaction L-threonyl-[protein] + ATP = O-phospho-L-threonyl-[protein] + ADP + H(+). With respect to regulation, phosphorylated and activated by pdk-1. In terms of biological role, acts downstream of PI3 kinase age-1 and kinase pdk-1 in the daf-2/insulin receptor-like transduction pathway. Phosphorylates Forkhead-related daf-16 and the longevity-promoting skn-1 transcription factors, which inhibits their entry into the nucleus and antagonizes their functions. Plays a role in maintaining the gonadal basement membrane through it's role in inhibiting daf-16 activity. Has an essential role in regulating developmental arrest at the dauer stage. Plays a role in immune function and pathogen resistance. Regulates salt chemotaxis learning. Downstream of age-1 and together with akt-2 and sgk-1, promotes cell survival during embryonic development. The polypeptide is Serine/threonine-protein kinase akt-1 (Caenorhabditis elegans).